We begin with the raw amino-acid sequence, 62 residues long: Photosystem II reaction center protein Z (62 aa).

Transmembrane regions (helical) follow at residues 8–28 (AVFALIATSSVLVISVPLVFA) and 41–61 (FSGTSLWIGLVFLVAILNSLI).

This sequence belongs to the PsbZ family. In terms of assembly, PSII is composed of 1 copy each of membrane proteins PsbA, PsbB, PsbC, PsbD, PsbE, PsbF, PsbH, PsbI, PsbJ, PsbK, PsbL, PsbM, PsbT, PsbY, PsbZ, Psb30/Ycf12, at least 3 peripheral proteins of the oxygen-evolving complex and a large number of cofactors. It forms dimeric complexes.

It localises to the plastid. The protein resides in the chloroplast thylakoid membrane. Functionally, may control the interaction of photosystem II (PSII) cores with the light-harvesting antenna, regulates electron flow through the 2 photosystem reaction centers. PSII is a light-driven water plastoquinone oxidoreductase, using light energy to abstract electrons from H(2)O, generating a proton gradient subsequently used for ATP formation. This is Photosystem II reaction center protein Z from Hordeum vulgare (Barley).